Reading from the N-terminus, the 243-residue chain is Myrosinase MB2 (243 aa).

N-linked (GlcNAc...) asparagine glycosylation occurs at N30. Residue Y51 participates in substrate binding. The active-site Nucleophile is E125. Substrate-binding positions include W173 and 180–181 (EF). Residue N216 is glycosylated (N-linked (GlcNAc...) asparagine).

Belongs to the glycosyl hydrolase 1 family. As to quaternary structure, homodimer. In vacuoles called myrosin grains of a certain class of cells, myrosin cells, distributed in the cotyledons and the axis of the embryo as well as in different organs of the growing plant.

The protein resides in the vacuole. The enzyme catalyses a thioglucoside + H2O = a sugar + a thiol.. Degradation of glucosinolates (glucose residue linked by a thioglucoside bound to an amino acid derivative) to glucose, sulfate and any of the products: thiocyanates, isothiocyanates, nitriles, epithionitriles or oxazolidine-2-thiones. In Sinapis alba (White mustard), this protein is Myrosinase MB2.